We begin with the raw amino-acid sequence, 632 residues long: U-box domain-containing protein 14 (632 aa).

Positions 247 to 321 (VIPEYFRCPI…ALWCESNGIE (75 aa)) constitute a U-box domain. ARM repeat units lie at residues 377–416 (VDNRVCIAEAGAIPLLVELLSSPDPRTQEHSVTALLNLSI), 418–457 (EGNKGAIVDAGAITDIVEVLKNGSMEARENAAATLFSLSV), 459–498 (DENKVAIGAAGAIQALISLLEEGTRRGKKDAATAIFNLCI), 500–539 (QGNKSRAVKGGIVDPLTRLLKDAGGGMVDEALAILAILST), and 541–580 (QEGKTAIAEAESIPVLVEIIRTGSPRNRENAAAILWYLCI).

As to quaternary structure, homodimer. Interacts with SNL1. Binds to SD11, SD16, SD17, SD18, SD113, SD129 and SD25. Expressed in flowers, green siliques, seeds and rosette leaves.

The catalysed reaction is S-ubiquitinyl-[E2 ubiquitin-conjugating enzyme]-L-cysteine + [acceptor protein]-L-lysine = [E2 ubiquitin-conjugating enzyme]-L-cysteine + N(6)-ubiquitinyl-[acceptor protein]-L-lysine.. The protein operates within protein modification; protein ubiquitination. In terms of biological role, functions as an E3 ubiquitin ligase with specific E2 ubiquitin-conjugating enzymes. Undergoes auto-ubiquitination. This is U-box domain-containing protein 14 (PUB14) from Arabidopsis thaliana (Mouse-ear cress).